Consider the following 494-residue polypeptide: Costunolide synthase (494 aa).

A helical transmembrane segment spans residues 3 to 23 (PLTIVSLVVASLFLFAFWALS). Position 432 (cysteine 432) interacts with heme.

Belongs to the cytochrome P450 family. Requires heme as cofactor.

It is found in the membrane. The enzyme catalyses germacra-1(10),4,11(13)-trien-12-oate + reduced [NADPH--hemoprotein reductase] + O2 = (+)-costunolide + oxidized [NADPH--hemoprotein reductase] + 2 H2O. Hydroxylates germacrene A acid to 6-alpha-hydroxy-germacrne A acid, a precursor of sesquiterpene lactones that spontaneously undergoes a lactonization which yields costunolide. Costunolide can then spontaneously conjugate to glutathione or cysteine. The polypeptide is Costunolide synthase (CYP71BL3) (Cichorium intybus (Chicory)).